A 155-amino-acid polypeptide reads, in one-letter code: 6,7-dimethyl-8-ribityllumazine synthase (155 aa).

Residues phenylalanine 22, 56–58 (AFE), and 80–82 (AVI) each bind 5-amino-6-(D-ribitylamino)uracil. 85 to 86 (AT) lines the (2S)-2-hydroxy-3-oxobutyl phosphate pocket. Histidine 88 (proton donor) is an active-site residue. Phenylalanine 113 serves as a coordination point for 5-amino-6-(D-ribitylamino)uracil. Position 127 (arginine 127) interacts with (2S)-2-hydroxy-3-oxobutyl phosphate.

Belongs to the DMRL synthase family.

The enzyme catalyses (2S)-2-hydroxy-3-oxobutyl phosphate + 5-amino-6-(D-ribitylamino)uracil = 6,7-dimethyl-8-(1-D-ribityl)lumazine + phosphate + 2 H2O + H(+). Its pathway is cofactor biosynthesis; riboflavin biosynthesis; riboflavin from 2-hydroxy-3-oxobutyl phosphate and 5-amino-6-(D-ribitylamino)uracil: step 1/2. In terms of biological role, catalyzes the formation of 6,7-dimethyl-8-ribityllumazine by condensation of 5-amino-6-(D-ribitylamino)uracil with 3,4-dihydroxy-2-butanone 4-phosphate. This is the penultimate step in the biosynthesis of riboflavin. The chain is 6,7-dimethyl-8-ribityllumazine synthase from Clostridium acetobutylicum (strain ATCC 824 / DSM 792 / JCM 1419 / IAM 19013 / LMG 5710 / NBRC 13948 / NRRL B-527 / VKM B-1787 / 2291 / W).